Consider the following 589-residue polypeptide: ATP-dependent lipid A-core flippase (589 aa).

5 consecutive transmembrane segments (helical) span residues 29–49 (LLLVAALIAALIEAAGTTGFL), 70–90 (WLPVQIILLFVVRGIAGYITD), 157–177 (VIGALALMLWHSWQVTLTILV), 261–281 (MIGAIGLSALLFVAGAQALAG), and 283–303 (LTAGDFVVLMTSMLTIIPGLK). An ABC transmembrane type-1 domain is found at 32–314 (VAALIAALIE…LTNVQNMVQR (283 aa)). The region spanning 346–582 (IEFRDVTARY…GGLYSHLHGM (237 aa)) is the ABC transporter domain. Residue 380 to 387 (GRSGSGKS) coordinates ATP.

The protein belongs to the ABC transporter superfamily. Lipid exporter (TC 3.A.1.106) family. In terms of assembly, homodimer.

The protein resides in the cell inner membrane. The enzyme catalyses ATP + H2O + lipid A-core oligosaccharideSide 1 = ADP + phosphate + lipid A-core oligosaccharideSide 2.. Involved in lipopolysaccharide (LPS) biosynthesis. Translocates lipid A-core from the inner to the outer leaflet of the inner membrane. Transmembrane domains (TMD) form a pore in the inner membrane and the ATP-binding domain (NBD) is responsible for energy generation. This is ATP-dependent lipid A-core flippase from Xanthomonas oryzae pv. oryzae (strain MAFF 311018).